A 120-amino-acid polypeptide reads, in one-letter code: U15-barytoxin-Tl1c (120 aa).

An N-terminal signal peptide occupies residues 1 to 16 (MKLFMVLVASFAFAVA). 4 disulfides stabilise this stretch: Cys55–Cys73, Cys66–Cys79, Cys70–Cys118, and Cys72–Cys89.

This sequence belongs to the neurotoxin 03 (Tx2) family. 03 subfamily. Expressed by the venom gland.

It localises to the secreted. Ion channel inhibitor. This Trittame loki (Brush-footed trapdoor spider) protein is U15-barytoxin-Tl1c.